The chain runs to 85 residues: Small ribosomal subunit protein uS17 (85 aa).

It belongs to the universal ribosomal protein uS17 family. Part of the 30S ribosomal subunit.

One of the primary rRNA binding proteins, it binds specifically to the 5'-end of 16S ribosomal RNA. This chain is Small ribosomal subunit protein uS17, found in Aggregatibacter actinomycetemcomitans (Actinobacillus actinomycetemcomitans).